The following is a 243-amino-acid chain: CAVP-target protein (243 aa).

Residues 1-22 (PKPPAEAKPAAKPAAPPAAANP) are disordered. Residues 7–20 (AKPAAKPAAPPAAA) show a composition bias toward low complexity. Residues 35–62 (SAATRIQASFRMHKNRMALKEKSIPKFS) form the IQ domain. 2 consecutive Ig-like C2-type domains span residues 59 to 150 (PKFS…LALE) and 151 to 243 (VPAK…VKVN).

This protein is the target of CAVP, which binds to it in a calcium-dependent manner. This is CAVP-target protein from Branchiostoma lanceolatum (Common lancelet).